The chain runs to 380 residues: Ribosomal RNA large subunit methyltransferase G (380 aa).

Belongs to the methyltransferase superfamily. RlmG family.

It is found in the cytoplasm. The enzyme catalyses guanosine(1835) in 23S rRNA + S-adenosyl-L-methionine = N(2)-methylguanosine(1835) in 23S rRNA + S-adenosyl-L-homocysteine + H(+). Functionally, specifically methylates the guanine in position 1835 (m2G1835) of 23S rRNA. This chain is Ribosomal RNA large subunit methyltransferase G, found in Streptomyces avermitilis (strain ATCC 31267 / DSM 46492 / JCM 5070 / NBRC 14893 / NCIMB 12804 / NRRL 8165 / MA-4680).